Here is a 469-residue protein sequence, read N- to C-terminus: Adenosylhomocysteinase (469 aa).

Substrate-binding residues include Thr-60, Asp-135, and Glu-195. NAD(+) is bound at residue 196–198 (TTT). Residues Lys-225 and Asp-229 each coordinate substrate. Residues Asn-230, 259–264 (GYGDVG), Glu-282, Asn-317, 338–340 (IGH), and Asn-383 contribute to the NAD(+) site.

Belongs to the adenosylhomocysteinase family. It depends on NAD(+) as a cofactor.

The protein resides in the cytoplasm. It carries out the reaction S-adenosyl-L-homocysteine + H2O = L-homocysteine + adenosine. Its pathway is amino-acid biosynthesis; L-homocysteine biosynthesis; L-homocysteine from S-adenosyl-L-homocysteine: step 1/1. Functionally, may play a key role in the regulation of the intracellular concentration of adenosylhomocysteine. The chain is Adenosylhomocysteinase from Hyphomonas neptunium (strain ATCC 15444).